Consider the following 819-residue polypeptide: MSGTSKESLGHGGLPGLGKACLTTMDKKLNMLNEKVDQLLHFQEDVTEKLQSMCRDMGHLERGLHRLEASRAPGPGGTDGVLRVDTQAGWPEVLELVRAMQQDAAQHGARLEALFRMVAAVDRAIALVGATFQKSKVADFLMQGRVPWRRGSPGDSPEENKERVEEEGAKPKHVLSASGVQSDAREPGEESQKADVLEGTVERLPPIRASGLGADPAQAVVSPGQGDGVPGPAQAFPGHLPLPTKGEAKAPETPSENLRTGLELAPAPGRVSVVSPSLEVAPGAGQGASSSRPDPEPLEEGTRLTPGPGPQCPGPPGLPAQARAAHSGGETPPRISIHIQEMGTPGEMLVTGRGSLGPTLTTDAPAAAQPGKQGPPGTGRCHQAPGTEPGEQTPEGARELSLLQESSSPGGVKAEEEQRAGAEPGTRPSLARSDDNDHKVGALGLQQGKSPGVGNPEPEQDCAARAPVRAEAVRRTPPGAEAGSMVLDDSPAPPAPFEHRLVSVKETSISAGYEVCQHEVLGGGRFGQVHRCTEKSTGLPLAAKIIKVKSAKDREDVKNEINIMNQLSHVNLIQLYDAFESKHSCTLVMEYVDGGELFDRITDEKYHLTELDVVLFTRQICEGVHYLHQHYILHLDLKPENILCVNQTGHQIKIIDFGLARRYKPREKLKVNFGTPEFLAPEVVNYEFVSFPTDMWSVGVITYMLLSGLSPFLGETDAETMNFIVNCSWDFDADTFEGLSEEAKDFVSRLLVKEESCRMSATQCLKHEWLNNLPAKALRSKTRLKSQLLLQKYIAQRKWKKHFYVVTAANRLRKFPTCP.

Residues 146–460 form a disordered region; it reads VPWRRGSPGD…PGVGNPEPEQ (315 aa). Position 152 is a phosphoserine (Ser152). Composition is skewed to basic and acidic residues over residues 158–170 and 183–196; these read EENKERVEEEGAK and DAREPGEESQKADV. Pro residues predominate over residues 307-318; it reads GPGPQCPGPPGL. Ser355, Ser401, and Ser408 each carry phosphoserine. Residues 515 to 770 form the Protein kinase domain; it reads VCQHEVLGGG…ATQCLKHEWL (256 aa). ATP contacts are provided by residues 521–529 and Lys544; that span reads LGGGRFGQV. The Proton acceptor role is filled by Asp636.

The protein belongs to the protein kinase superfamily. CAMK Ser/Thr protein kinase family. The cofactor is Mg(2+). In terms of processing, phosphorylated on serine residues.

The protein localises to the cytoplasm. The enzyme catalyses L-seryl-[myosin light chain] + ATP = O-phospho-L-seryl-[myosin light chain] + ADP + H(+). It catalyses the reaction L-threonyl-[myosin light chain] + ATP = O-phospho-L-threonyl-[myosin light chain] + ADP + H(+). Functionally, kinase that phosphorylates MYL2 in vitro. Promotes sarcomere formation in cardiomyocytes and increases cardiomyocyte contractility. This is Myosin light chain kinase 3 (MYLK3) from Pongo abelii (Sumatran orangutan).